A 438-amino-acid chain; its full sequence is sn-glycerol-3-phosphate-binding periplasmic protein UgpB (438 aa).

The signal sequence occupies residues 1-23; the sequence is MKPLHYTASALALGLALMGNAQA. Sn-glycerol 3-phosphate contacts are provided by Tyr65, Glu89, Ser144, Ser270, Gly307, Tyr346, and Arg397.

This sequence belongs to the bacterial solute-binding protein 1 family. In terms of assembly, the complex is composed of two ATP-binding proteins (UgpC), two transmembrane proteins (UgpA and UgpE) and a solute-binding protein (UgpB).

The protein localises to the periplasm. Its function is as follows. Part of the ABC transporter complex UgpBAEC involved in sn-glycerol-3-phosphate (G3P) import. Binds G3P. This Escherichia coli O157:H7 protein is sn-glycerol-3-phosphate-binding periplasmic protein UgpB (ugpB).